Reading from the N-terminus, the 203-residue chain is MLTEQQRRELDWEKTDGLMPAIVQHAVSGEVLMLGYMNPQALDKTIESGHVTFFSRTKQRLWTKGETSGHVLNVVSIAPDCDNDTLLVLANPVGPTCHKGTSSCFGDASHQWLFLYQLEQLLAERKTADPTSSYTAKLYASGTKRIAQKVGEEGVETALAATVNDRFELTNEASDLMYHLLVLLQDQDLNLTTVIDNLRKRHQ.

The interval 1–114 (MLTEQQRREL…FGDASHQWLF (114 aa)) is phosphoribosyl-AMP cyclohydrolase. Positions 115-203 (LYQLEQLLAE…VIDNLRKRHQ (89 aa)) are phosphoribosyl-ATP pyrophosphohydrolase.

This sequence in the N-terminal section; belongs to the PRA-CH family. In the C-terminal section; belongs to the PRA-PH family.

The protein resides in the cytoplasm. The catalysed reaction is 1-(5-phospho-beta-D-ribosyl)-ATP + H2O = 1-(5-phospho-beta-D-ribosyl)-5'-AMP + diphosphate + H(+). It catalyses the reaction 1-(5-phospho-beta-D-ribosyl)-5'-AMP + H2O = 1-(5-phospho-beta-D-ribosyl)-5-[(5-phospho-beta-D-ribosylamino)methylideneamino]imidazole-4-carboxamide. It participates in amino-acid biosynthesis; L-histidine biosynthesis; L-histidine from 5-phospho-alpha-D-ribose 1-diphosphate: step 2/9. It functions in the pathway amino-acid biosynthesis; L-histidine biosynthesis; L-histidine from 5-phospho-alpha-D-ribose 1-diphosphate: step 3/9. The chain is Histidine biosynthesis bifunctional protein HisIE (hisI) from Salmonella typhimurium (strain LT2 / SGSC1412 / ATCC 700720).